A 147-amino-acid chain; its full sequence is Globin (147 aa).

S2 is modified (N-acetylserine). The Globin domain maps to 2–147 (SLSAAEADLA…IIDALKAAGK (146 aa)). H96 is a binding site for heme b.

It belongs to the globin family. Monomer.

The sequence is that of Globin from Aplysia limacina (Sea hare).